The sequence spans 643 residues: uncharacterized protein (643 aa).

Residues 561–643 (LNQELETSSE…GADRKKRGVY (83 aa)) are disordered. Positions 591–606 (SRGGRGGRGARGGNRG) are enriched in gly residues. Residues 617-635 (GHDRQMKEKHKSDIKQRGA) are compositionally biased toward basic and acidic residues.

This is an uncharacterized protein from Caenorhabditis elegans.